The sequence spans 218 residues: Hypoxanthine-guanine phosphoribosyltransferase (218 aa).

Position 2 is an N-acetylalanine (Ala-2). Lys-69 provides a ligand contact to GMP. Lys-103 carries the N6-acetyllysine modification. A Glycyl lysine isopeptide (Lys-Gly) (interchain with G-Cter in SUMO1); alternate cross-link involves residue Lys-115. A Glycyl lysine isopeptide (Lys-Gly) (interchain with G-Cter in SUMO2); alternate cross-link involves residue Lys-115. Residues 134–142 (EDIIDTGKT), Lys-166, 186–188 (KFV), and Asp-194 each bind GMP. Asp-138 serves as the catalytic Proton acceptor. Thr-142 bears the Phosphothreonine mark. Asp-194 is a binding site for Mg(2+).

The protein belongs to the purine/pyrimidine phosphoribosyltransferase family. As to quaternary structure, homotetramer. It depends on Mg(2+) as a cofactor.

It localises to the cytoplasm. It catalyses the reaction IMP + diphosphate = hypoxanthine + 5-phospho-alpha-D-ribose 1-diphosphate. It carries out the reaction GMP + diphosphate = guanine + 5-phospho-alpha-D-ribose 1-diphosphate. It functions in the pathway purine metabolism; IMP biosynthesis via salvage pathway; IMP from hypoxanthine: step 1/1. Functionally, converts guanine to guanosine monophosphate, and hypoxanthine to inosine monophosphate. Transfers the 5-phosphoribosyl group from 5-phosphoribosylpyrophosphate onto the purine. Plays a central role in the generation of purine nucleotides through the purine salvage pathway. This Cricetulus griseus (Chinese hamster) protein is Hypoxanthine-guanine phosphoribosyltransferase (HPRT1).